The chain runs to 479 residues: Anaerobic nitric oxide reductase flavorubredoxin (479 aa).

The tract at residues 30-210 is zinc metallo-hydrolase; it reads LRGSSYNSYL…PFSRLVTPKI (181 aa). Fe cation contacts are provided by histidine 79, glutamate 81, aspartate 83, histidine 147, aspartate 166, and histidine 227. The 140-residue stretch at 254-393 folds into the Flavodoxin-like domain; it reads ITIVYDTMSN…LCREHGREIA (140 aa). Residues 260–264 and 342–369 contribute to the FMN site; these read TMSNN and AFGS…EMSL. The region spanning 423–474 is the Rubredoxin-like domain; the sequence is GPRMQCSVCQWIYDPAKGEPMQDVAPGTPWSEVPDNFLCPECSLGKDVFDEL. 4 residues coordinate Fe cation: cysteine 428, cysteine 431, cysteine 461, and cysteine 464.

In the N-terminal section; belongs to the zinc metallo-hydrolase group 3 family. Homotetramer. Fe cation serves as cofactor. It depends on FMN as a cofactor.

The protein resides in the cytoplasm. Its pathway is nitrogen metabolism; nitric oxide reduction. In terms of biological role, anaerobic nitric oxide reductase; uses NADH to detoxify nitric oxide (NO), protecting several 4Fe-4S NO-sensitive enzymes. Has at least 2 reductase partners, only one of which (NorW, flavorubredoxin reductase) has been identified. NO probably binds to the di-iron center; electrons enter from the NorW at rubredoxin and are transferred sequentially to the FMN center and the di-iron center. Also able to function as an aerobic oxygen reductase. This is Anaerobic nitric oxide reductase flavorubredoxin from Escherichia coli (strain UTI89 / UPEC).